The following is a 424-amino-acid chain: Serpin A11 (424 aa).

A signal peptide spans 1 to 21; sequence MGPVWLWLWLLVAEVLLPVHC. Residues Asn-108, Asn-171, Asn-352, and Asn-387 are each glycosylated (N-linked (GlcNAc...) asparagine).

The protein belongs to the serpin family.

The protein resides in the secreted. This is Serpin A11 (Serpina11) from Mus musculus (Mouse).